We begin with the raw amino-acid sequence, 154 residues long: Cyanate hydratase (154 aa).

Catalysis depends on residues R100, E103, and S126.

Belongs to the cyanase family.

It carries out the reaction cyanate + hydrogencarbonate + 3 H(+) = NH4(+) + 2 CO2. Its function is as follows. Catalyzes the reaction of cyanate with bicarbonate to produce ammonia and carbon dioxide. The protein is Cyanate hydratase of Aspergillus terreus (strain NIH 2624 / FGSC A1156).